The sequence spans 459 residues: LAS seventeen-binding protein 3 (459 aa).

Residues 219–403 are disordered; sequence RPSNGGRGSF…APTSPSTSSP (185 aa). Serine 227 is modified (phosphoserine). The segment covering 229-242 has biased composition (acidic residues); it reads DDDEDDYYDDDDYY. A compositionally biased stretch (low complexity) spans 243–262; it reads NDIPSSFSSTDASSTRPNTR. Positions 289–300 are enriched in polar residues; the sequence is YSRNSRLAPTNS. Threonine 298 bears the Phosphothreonine mark. Phosphoserine occurs at positions 300 and 303. Positions 340 to 350 are enriched in acidic residues; that stretch reads DEYDDYDDDYE. Positions 351 to 371 are enriched in basic and acidic residues; the sequence is SGYRRGNGRDRTKDREVDDLS. The segment covering 372–391 has biased composition (polar residues); sequence NRFSKSRISSASTPQTSQGR. Phosphothreonine is present on threonine 393. Over residues 393 to 403 the composition is skewed to low complexity; sequence TAPTSPSTSSP. 3 positions are modified to phosphoserine: serine 397, serine 402, and serine 416. The 60-residue stretch at 400-459 folds into the SH3 domain; that stretch reads TSSPKAVALYSFAGEESGDLPFRKGDVITILKKSDSQNDWWTGRVNGREGIFPANYVELV.

It belongs to the SH3YL1 family. As to quaternary structure, interacts with LAS17. Post-translationally, phosphorylation of Ser-397 is induced 2-fold in response to mating pheromone.

It localises to the cytoplasm. This is LAS seventeen-binding protein 3 (LSB3) from Saccharomyces cerevisiae (strain YJM789) (Baker's yeast).